A 172-amino-acid polypeptide reads, in one-letter code: Small ribosomal subunit protein uS5 (172 aa).

The S5 DRBM domain occupies 17–80; the sequence is LKEKMIAVNR…EEARRNMTKV (64 aa).

The protein belongs to the universal ribosomal protein uS5 family. Part of the 30S ribosomal subunit. Contacts proteins S4 and S8.

Functionally, with S4 and S12 plays an important role in translational accuracy. Located at the back of the 30S subunit body where it stabilizes the conformation of the head with respect to the body. The polypeptide is Small ribosomal subunit protein uS5 (Polaromonas sp. (strain JS666 / ATCC BAA-500)).